We begin with the raw amino-acid sequence, 87 residues long: Retinal rod rhodopsin-sensitive cGMP 3',5'-cyclic phosphodiesterase subunit gamma (87 aa).

N-acetylmethionine is present on Met1. The tract at residues 16 to 54 (VVGGPVTPRKGPPKFKQRQTRQFKSKPPKKGVQGFGDDI) is disordered. Over residues 26–44 (GPPKFKQRQTRQFKSKPPK) the composition is skewed to basic residues.

The protein belongs to the rod/cone cGMP-PDE gamma subunit family. As to quaternary structure, oligomer composed of two catalytic chains (alpha and beta), an inhibitory chain (gamma) and the delta chain.

The catalysed reaction is 3',5'-cyclic GMP + H2O = GMP + H(+). Functionally, participates in processes of transmission and amplification of the visual signal. cGMP-PDEs are the effector molecules in G-protein-mediated phototransduction in vertebrate rods and cones. The polypeptide is Retinal rod rhodopsin-sensitive cGMP 3',5'-cyclic phosphodiesterase subunit gamma (PDE6G) (Cavia porcellus (Guinea pig)).